The following is an 89-amino-acid chain: Small ribosomal subunit protein uS15 (89 aa).

The protein belongs to the universal ribosomal protein uS15 family. In terms of assembly, part of the 30S ribosomal subunit. Forms a bridge to the 50S subunit in the 70S ribosome, contacting the 23S rRNA.

In terms of biological role, one of the primary rRNA binding proteins, it binds directly to 16S rRNA where it helps nucleate assembly of the platform of the 30S subunit by binding and bridging several RNA helices of the 16S rRNA. Its function is as follows. Forms an intersubunit bridge (bridge B4) with the 23S rRNA of the 50S subunit in the ribosome. In Maridesulfovibrio salexigens (strain ATCC 14822 / DSM 2638 / NCIMB 8403 / VKM B-1763) (Desulfovibrio salexigens), this protein is Small ribosomal subunit protein uS15.